Here is a 447-residue protein sequence, read N- to C-terminus: Adenylosuccinate synthetase (447 aa).

Residues 12–18 and 40–42 contribute to the GTP site; these read GDEGKGK and GHT. The active-site Proton acceptor is the aspartate 13. The Mg(2+) site is built by aspartate 13 and glycine 40. IMP is bound by residues 13–16, 38–41, threonine 128, arginine 142, glutamine 223, threonine 238, and arginine 302; these read DEGK and NAGH. Histidine 41 (proton donor) is an active-site residue. 298–304 lines the substrate pocket; that stretch reads TTTGRKR. GTP contacts are provided by residues arginine 304, 330 to 332, and 412 to 414; these read KLD and SLG.

It belongs to the adenylosuccinate synthetase family. Homodimer. Mg(2+) is required as a cofactor.

Its subcellular location is the cytoplasm. The enzyme catalyses IMP + L-aspartate + GTP = N(6)-(1,2-dicarboxyethyl)-AMP + GDP + phosphate + 2 H(+). It functions in the pathway purine metabolism; AMP biosynthesis via de novo pathway; AMP from IMP: step 1/2. Functionally, plays an important role in the de novo pathway of purine nucleotide biosynthesis. Catalyzes the first committed step in the biosynthesis of AMP from IMP. The sequence is that of Adenylosuccinate synthetase from Nostoc sp. (strain PCC 7120 / SAG 25.82 / UTEX 2576).